The sequence spans 1357 residues: DNA-directed RNA polymerase subunit beta (1357 aa).

Belongs to the RNA polymerase beta chain family. In terms of assembly, the RNAP catalytic core consists of 2 alpha, 1 beta, 1 beta' and 1 omega subunit. When a sigma factor is associated with the core the holoenzyme is formed, which can initiate transcription.

It catalyses the reaction RNA(n) + a ribonucleoside 5'-triphosphate = RNA(n+1) + diphosphate. In terms of biological role, DNA-dependent RNA polymerase catalyzes the transcription of DNA into RNA using the four ribonucleoside triphosphates as substrates. This is DNA-directed RNA polymerase subunit beta from Nitrosospira multiformis (strain ATCC 25196 / NCIMB 11849 / C 71).